Consider the following 606-residue polypeptide: Transmembrane 9 superfamily member 1 (606 aa).

A signal peptide spans 1–27 (MTVLGHPRSWSCRWWPLLLLLLLTGRE). An N-linked (GlcNAc...) asparagine glycan is attached at Asn-178. The next 4 membrane-spanning stretches (helical) occupy residues 237–257 (LSII…AVIL), 310–330 (VLGV…MALL), 339–359 (GAIN…SGYV), and 373–393 (VWNI…TWSV). N-linked (GlcNAc...) asparagine glycosylation occurs at Asn-401. 4 consecutive transmembrane segments (helical) span residues 412 to 432 (ILLL…IGGI), 469 to 489 (VGGF…FATV), 499 to 519 (GILF…SIAL), and 535 to 555 (SVLS…FYYA). N-linked (GlcNAc...) asparagine glycosylation occurs at Asn-559. The chain crosses the membrane as a helical span at residues 570–590 (FGYSLLTGYVFFLMLGTISFF).

Belongs to the nonaspanin (TM9SF) (TC 9.A.2) family.

Its subcellular location is the lysosome membrane. It localises to the cytoplasmic vesicle. The protein localises to the autophagosome membrane. Functionally, plays an essential role in autophagy. The protein is Transmembrane 9 superfamily member 1 (TM9SF1) of Bos taurus (Bovine).